Here is a 179-residue protein sequence, read N- to C-terminus: Replication restart protein DnaT (179 aa).

Residues 154 to 179 (SNGGLPKRDVNTVSEPDSQIPPGFRG) form a disordered region.

This sequence belongs to the DnaT family. Homooligomerizes. Interacts with PriB. Component of the replication restart primosome. Primosome assembly occurs via a 'hand-off' mechanism. PriA binds to replication forks, subsequently PriB then DnaT bind; DnaT then displaces ssDNA to generate the helicase loading substrate.

Involved in the restart of stalled replication forks, which reloads the replicative helicase on sites other than the origin of replication. Can function in multiple replication restart pathways. Displaces ssDNA from a PriB-ssDNA complex. Probably forms a spiral filament on ssDNA. This is Replication restart protein DnaT from Escherichia coli O127:H6 (strain E2348/69 / EPEC).